A 626-amino-acid polypeptide reads, in one-letter code: Putative ankyrin repeat protein R837 (626 aa).

ANK repeat units follow at residues 42–72 (EYFN…GLIR), 80–109 (TLNT…NHRY), 110–139 (SEDK…NIKS), 140–169 (RNNY…DITV), 171–199 (DYEV…DIKK), 201–230 (NKKR…DVYR), 242–269 (KNYK…YQLS), 270–298 (DTNN…LHEL), 299–328 (NLNQ…DINT), 330–358 (GNSC…RLTS), 393–416 (TIMS…KSSL), 417–446 (DYES…ITKQ), 452–479 (INNS…GINI), 480–509 (CINY…NINE), 510–539 (FGDL…NIYI), 540–569 (IKDN…DYHK), 570–599 (KNEL…KTKT), and 601–626 (FFDP…NEIK).

The chain is Putative ankyrin repeat protein R837 from Acanthamoeba polyphaga (Amoeba).